The sequence spans 381 residues: MESIGIVAPQTMHFAEPLRLQSGSVIGNYQLVVETYGELNAARSNAVLVCHALNASHHVAGVYADDPRSTGWWDNMVGPGKPLDTNRFFVIGVNNLGSCFGSTGPMSIDPSTGKPYGARFPVVTVEDWVHAQARVADAFGIERFAAVMGGSLGGMQALAWSLMYPERVAHCIDIASTPKLSAQNIAFNEVARSAILSDPDFHGGDYYAHGVKPKRGLRVARMIGHITYLSDDDMAEKFGRALRRADGALDAYNFSFDVEFEVESYLRYQGDKFADYFDANTYLLITRALDYFDPAKAFDGNLTAALAHTQAKYLIASFSTDWRFAPARSREIVKALLDNKRTVSYAEIDAPHGHDAFLLDDARYHNLIRAYYERIANEVGA.

The AB hydrolase-1 domain occupies 45 to 360 (NAVLVCHALN…PHGHDAFLLD (316 aa)). Ser151 (nucleophile) is an active-site residue. Arg221 is a binding site for substrate. Residues Asp321 and His354 contribute to the active site. A substrate-binding site is contributed by Asp355.

This sequence belongs to the AB hydrolase superfamily. MetX family. Homodimer.

It localises to the cytoplasm. It carries out the reaction L-homoserine + succinyl-CoA = O-succinyl-L-homoserine + CoA. The protein operates within amino-acid biosynthesis; L-methionine biosynthesis via de novo pathway; O-succinyl-L-homoserine from L-homoserine: step 1/1. Transfers a succinyl group from succinyl-CoA to L-homoserine, forming succinyl-L-homoserine. The protein is Homoserine O-succinyltransferase of Burkholderia multivorans (strain ATCC 17616 / 249).